We begin with the raw amino-acid sequence, 316 residues long: Ornithine carbamoyltransferase (316 aa).

Carbamoyl phosphate contacts are provided by residues 57–60 (STRT), Gln84, Arg108, and 135–138 (HPCQ). Residues Asn166, Asp230, and 234–235 (SM) each bind L-ornithine. Carbamoyl phosphate is bound by residues 269 to 270 (CL) and Arg297.

The protein belongs to the aspartate/ornithine carbamoyltransferase superfamily. OTCase family.

It is found in the cytoplasm. The catalysed reaction is carbamoyl phosphate + L-ornithine = L-citrulline + phosphate + H(+). Its pathway is amino-acid biosynthesis; L-arginine biosynthesis; L-arginine from L-ornithine and carbamoyl phosphate: step 1/3. Reversibly catalyzes the transfer of the carbamoyl group from carbamoyl phosphate (CP) to the N(epsilon) atom of ornithine (ORN) to produce L-citrulline. The protein is Ornithine carbamoyltransferase of Bacillus cereus (strain ZK / E33L).